Here is a 199-residue protein sequence, read N- to C-terminus: MSVETERSSTESSAASGLDFEDTALTLRLPGSLAAAAAPDPDRKRSSPSSSDAADAADNSSPLAAAADAPPAPKARVVGWPPVRSFRKNALAAKFVKVAVDGAPYLRKVDLEAYSGYDQLLRALQDKFFSHFTIRKFADDERKLVDAVNGTEYVPTYEDKDGDWMLVGDVPWKMFVETCQRLRLMKSSEAVNLAPRAAQ.

Residues 25-29 carry the EAR-like (transcriptional repression) motif; it reads LTLRL. Residues 31-74 are disordered; sequence GSLAAAAAPDPDRKRSSPSSSDAADAADNSSPLAAAADAPPAPK. The segment covering 47 to 69 has biased composition (low complexity); sequence SPSSSDAADAADNSSPLAAAADA. The PB1 domain occupies 93–187; the sequence is AKFVKVAVDG…TCQRLRLMKS (95 aa).

Belongs to the Aux/IAA family. In terms of assembly, homodimers and heterodimers. As to expression, highly expressed in flowers. Expressed at low levels in roots and shoots.

It is found in the nucleus. Functionally, aux/IAA proteins are short-lived transcriptional factors that function as repressors of early auxin response genes at low auxin concentrations. This Oryza sativa subsp. japonica (Rice) protein is Auxin-responsive protein IAA1 (IAA1).